Reading from the N-terminus, the 78-residue chain is Acyl carrier protein (78 aa).

One can recognise a Carrier domain in the interval Ser2–Lys77. The residue at position 37 (Ser37) is an O-(pantetheine 4'-phosphoryl)serine.

The protein belongs to the acyl carrier protein (ACP) family. In terms of processing, 4'-phosphopantetheine is transferred from CoA to a specific serine of apo-ACP by AcpS. This modification is essential for activity because fatty acids are bound in thioester linkage to the sulfhydryl of the prosthetic group.

It localises to the cytoplasm. Its pathway is lipid metabolism; fatty acid biosynthesis. Carrier of the growing fatty acid chain in fatty acid biosynthesis. This chain is Acyl carrier protein, found in Pseudomonas putida (strain GB-1).